Consider the following 138-residue polypeptide: MLQSNRLAIYAIGKIKKLWIRDGINQYKKRMPELIINELKTFNLNNLRSNNNIIICLSEEGKQFNSVELCSLLLNFKNKKINFLIGDTDGISSDIKKNSDLILSLSPLTFPHELARLILIEQIYRAISISNNSPYHRS.

S-adenosyl-L-methionine is bound by residues leucine 57, glycine 86, and 105–110 (LSPLTF).

It belongs to the RNA methyltransferase RlmH family. As to quaternary structure, homodimer.

It localises to the cytoplasm. It carries out the reaction pseudouridine(1915) in 23S rRNA + S-adenosyl-L-methionine = N(3)-methylpseudouridine(1915) in 23S rRNA + S-adenosyl-L-homocysteine + H(+). Functionally, specifically methylates the pseudouridine at position 1915 (m3Psi1915) in 23S rRNA. The polypeptide is Ribosomal RNA large subunit methyltransferase H (Prochlorococcus marinus (strain MIT 9312)).